A 467-amino-acid chain; its full sequence is Probable circularly permuted 1,3-beta-glucanase TOS1 (467 aa).

An N-terminal signal peptide occupies residues 1–21 (MKFSSTTLLAGLSSLTATVSA). Over residues 158 to 172 (PAVSSAAADDNANSG) the composition is skewed to low complexity. Disordered stretches follow at residues 158-187 (PAVS…GYGS) and 200-223 (SDIS…TASV). The segment covering 173–185 (SGSGSSAGSGSGY) has biased composition (gly residues). Residues 203–222 (STKSAPTSTSAQPSSSETAS) are compositionally biased toward low complexity. Positions 374 to 379 (ELDLFE) match the ExDxxE motif motif. The segment at 391–413 (HLHDGQGSSQNSNNGGGGSQDYF) is disordered.

It belongs to the PGA52 family. In terms of processing, cleaved by KEX2 in vitro.

It is found in the secreted. It carries out the reaction Hydrolysis of (1-&gt;3)-beta-D-glucosidic linkages in (1-&gt;3)-beta-D-glucans.. Functionally, probable circularly permuted 1,3-beta-glucanase involved in cell wall modification through beta-1,3-glucan network alterations such as increased branching or remodeling. Plays a role in engulfment by host macrophages. The chain is Probable circularly permuted 1,3-beta-glucanase TOS1 from Candida albicans (strain SC5314 / ATCC MYA-2876) (Yeast).